Consider the following 290-residue polypeptide: Pyridoxal kinase PdxY (290 aa).

Substrate is bound by residues S12 and 47 to 48; that span reads TQ. ATP contacts are provided by residues D114, E151, K184, and 211–214; that span reads RPLL. Residue D225 coordinates substrate.

This sequence belongs to the pyridoxine kinase family. PdxY subfamily. As to quaternary structure, homodimer. The cofactor is Mg(2+).

It carries out the reaction pyridoxal + ATP = pyridoxal 5'-phosphate + ADP + H(+). Its pathway is cofactor metabolism; pyridoxal 5'-phosphate salvage; pyridoxal 5'-phosphate from pyridoxal: step 1/1. Pyridoxal kinase involved in the salvage pathway of pyridoxal 5'-phosphate (PLP). Catalyzes the phosphorylation of pyridoxal to PLP. This is Pyridoxal kinase PdxY from Pseudomonas fluorescens (strain SBW25).